Reading from the N-terminus, the 377-residue chain is Metallo-hydrolase mfmC (377 aa).

Zn(2+)-binding residues include H126, H128, D130, H131, H209, and D233.

It belongs to the metallo-beta-lactamase superfamily.

The protein operates within secondary metabolite biosynthesis; terpenoid biosynthesis. Its function is as follows. Metallo-hydrolase; part of the gene cluster that mediates the biosynthesis of the phthalide-terpenoid hybrid 11'-O-desmethylfendlerol. Within the pathway, mfma and mfmC act together to convert 3,5-dimethylorsellinic acid (DMOA) into the phthalide 5,7-dihydroxy-4-(hydroxymethyl)-6-methylphthalide. The biosynthesis of 11'-O-desmethylfendlerol begins with the NR-PKS mfmB that forms 3,5-dimethylorsellinic acid (DMOA), which is then transformed into the phthalide 5,7-dihydroxy-4-(hydroxymethyl)-6-methylphthalide by the cytochrome P450 monooxygenase mfmA and the hydrolase mfmC. Subsequently, the methyltransferase mfmE catalyzes 7-O-methylation to yield 5-hydroxy-4-(hydroxymethyl)-7-methoxy-6-methylphthalide, which undergoes C-3 hydroxylation by the cytochrome P450 monooxygenase mfmF. The resultant cyclopolic acid (2,5-dihydroxy-4-(hydroxymethyl)-7-methoxy-6-methylphthalide) is then farnesylated by the DMATS-type prenyltransferase mfmD to afford 5-O-farnesylcyclopolic acid. Finally, the Pyr4-family terpene cyclase mfmH cyclizes the farnesyl moiety of 5-O-farnesylcyclopolic acid into a drimane-like structure, thus completing the biosynthesis of 11'-O-desmethylfendlerol. The polypeptide is Metallo-hydrolase mfmC (Annulohypoxylon moriforme (Filamentous fungus)).